Reading from the N-terminus, the 198-residue chain is Small ribosomal subunit protein uS2 (198 aa).

This sequence belongs to the universal ribosomal protein uS2 family.

This chain is Small ribosomal subunit protein uS2 (rps2), found in Methanothermobacter thermautotrophicus (strain ATCC 29096 / DSM 1053 / JCM 10044 / NBRC 100330 / Delta H) (Methanobacterium thermoautotrophicum).